Consider the following 441-residue polypeptide: Ribosomal protein uS12 methylthiotransferase RimO (441 aa).

The MTTase N-terminal domain maps to 7–117 (ASIAMISLGC…VVLEVHRAAP (111 aa)). Residues cysteine 16, cysteine 52, cysteine 81, cysteine 150, cysteine 154, and cysteine 157 each coordinate [4Fe-4S] cluster. Residues 136-373 (LTPRHYAYLK…MAHQQAISAA (238 aa)) form the Radical SAM core domain. Residues 376–441 (QTRVGREIDV…DEYDLHGDAV (66 aa)) enclose the TRAM domain.

The protein belongs to the methylthiotransferase family. RimO subfamily. Requires [4Fe-4S] cluster as cofactor.

It localises to the cytoplasm. The enzyme catalyses L-aspartate(89)-[ribosomal protein uS12]-hydrogen + (sulfur carrier)-SH + AH2 + 2 S-adenosyl-L-methionine = 3-methylsulfanyl-L-aspartate(89)-[ribosomal protein uS12]-hydrogen + (sulfur carrier)-H + 5'-deoxyadenosine + L-methionine + A + S-adenosyl-L-homocysteine + 2 H(+). Its function is as follows. Catalyzes the methylthiolation of an aspartic acid residue of ribosomal protein uS12. The sequence is that of Ribosomal protein uS12 methylthiotransferase RimO from Bordetella petrii (strain ATCC BAA-461 / DSM 12804 / CCUG 43448).